Consider the following 603-residue polypeptide: Probable HECT-type ubiquitin ligase-interacting protein creD (603 aa).

2 disordered regions span residues E375 to S398 and L432 to P499. Basic and acidic residues predominate over residues T443–R455. Positions P465 to R481 are enriched in low complexity. Residues R482–V492 show a composition bias toward basic and acidic residues.

The protein belongs to the arrestin family. As to quaternary structure, interacts with hulA.

Component of the regulatory network controlling carbon source utilization through ubiquitination and deubiquitination involving creA, creB, creC, creD and acrB. May be involved in signaling by recognizing appropriately phosphorylated substrates via its arrestin domains and then recruit a HECT-type ubiquitin ligase such as hulA, leading to ubiquitination of the substrate, providing a link between ubiquitination and phosphorylation in protein regulation and stability. The polypeptide is Probable HECT-type ubiquitin ligase-interacting protein creD (creD) (Aspergillus flavus (strain ATCC 200026 / FGSC A1120 / IAM 13836 / NRRL 3357 / JCM 12722 / SRRC 167)).